We begin with the raw amino-acid sequence, 355 residues long: Natterin-1 (355 aa).

The signal sequence occupies residues 1 to 18 (MIPSVLLVTLLLLSWTSA). The propeptide occupies 19 to 27 (EKDLKVRVA).

Belongs to the natterin family. In terms of processing, contains 4 disulfide bonds. As to expression, expressed by the venom gland.

The protein localises to the secreted. Its activity is regulated as follows. Inhibited by tissue-kallikrein inhibitor TKI and trasylol. Plasma kallikrein inhibitor PKSI527 and classical inhibitors of serine-, metallo-, thiol- or aspartate-peptidases evokes a minor inhibition of the peptide digestion. In terms of biological role, shows nociceptive, edema-inducing and kininogenase activity with release of kallidin from low molecular weight kininogen. The cleavage occurs at Met-Lys bonds. In Thalassophryne nattereri (Copper Joe toadfish), this protein is Natterin-1.